A 94-amino-acid polypeptide reads, in one-letter code: Large ribosomal subunit protein uL23 (94 aa).

Belongs to the universal ribosomal protein uL23 family. In terms of assembly, part of the 50S ribosomal subunit. Contacts protein L29, and trigger factor when it is bound to the ribosome.

Functionally, one of the early assembly proteins it binds 23S rRNA. One of the proteins that surrounds the polypeptide exit tunnel on the outside of the ribosome. Forms the main docking site for trigger factor binding to the ribosome. The chain is Large ribosomal subunit protein uL23 from Akkermansia muciniphila (strain ATCC BAA-835 / DSM 22959 / JCM 33894 / BCRC 81048 / CCUG 64013 / CIP 107961 / Muc).